A 598-amino-acid chain; its full sequence is Elongation factor 4 (598 aa).

Residues 2 to 183 (KKIRNFCIIA…AIIEKIPPPK (182 aa)) enclose the tr-type G domain. Residues 14–19 (DHGKST) and 130–133 (NKVD) contribute to the GTP site.

It belongs to the TRAFAC class translation factor GTPase superfamily. Classic translation factor GTPase family. LepA subfamily.

It is found in the cell inner membrane. The catalysed reaction is GTP + H2O = GDP + phosphate + H(+). In terms of biological role, required for accurate and efficient protein synthesis under certain stress conditions. May act as a fidelity factor of the translation reaction, by catalyzing a one-codon backward translocation of tRNAs on improperly translocated ribosomes. Back-translocation proceeds from a post-translocation (POST) complex to a pre-translocation (PRE) complex, thus giving elongation factor G a second chance to translocate the tRNAs correctly. Binds to ribosomes in a GTP-dependent manner. The polypeptide is Elongation factor 4 (Flavobacterium johnsoniae (strain ATCC 17061 / DSM 2064 / JCM 8514 / BCRC 14874 / CCUG 350202 / NBRC 14942 / NCIMB 11054 / UW101) (Cytophaga johnsonae)).